Here is a 119-residue protein sequence, read N- to C-terminus: uncharacterized protein (119 aa).

Helical transmembrane passes span 52–72 and 88–108; these read IVLF…VINI and VLFS…IFLI.

The protein resides in the membrane. This is an uncharacterized protein from Dictyostelium discoideum (Social amoeba).